The primary structure comprises 600 residues: Kynurenine 3-monooxygenase (600 aa).

The tract at residues 217 to 242 is disordered; sequence GDSCADEPSGCGGRKQATTKSQGSEY.

This sequence belongs to the aromatic-ring hydroxylase family. KMO subfamily. Requires FAD as cofactor.

The protein localises to the mitochondrion outer membrane. It carries out the reaction L-kynurenine + NADPH + O2 + H(+) = 3-hydroxy-L-kynurenine + NADP(+) + H2O. It functions in the pathway cofactor biosynthesis; NAD(+) biosynthesis; quinolinate from L-kynurenine: step 1/3. Functionally, catalyzes the hydroxylation of L-kynurenine (L-Kyn) to form 3-hydroxy-L-kynurenine (L-3OHKyn). Required for synthesis of quinolinic acid. This Mycosarcoma maydis (Corn smut fungus) protein is Kynurenine 3-monooxygenase.